The primary structure comprises 262 residues: Glycerol uptake facilitator protein (262 aa).

The Cytoplasmic portion of the chain corresponds to 1 to 7 (MNFCSKK). A helical membrane pass occupies residues 8–36 (KILKQCFFEFLGTGLIIFLGISSLVVSKL). Topologically, residues 37–41 (TNFHF) are extracellular. The chain crosses the membrane as a helical span at residues 42–62 (NHCEISCIWGLGVFISICFCS). The Cytoplasmic segment spans residues 63-65 (SVS). Residues 66–69 (GAHL) lie within the membrane without spanning it. An NPA 1 motif is present at residues 70–72 (NPA). The segment at residues 70-80 (NPAITIFLFLS) is an intramembrane region (helical). Over 81-86 (SQFNKK) the chain is Cytoplasmic. The chain crosses the membrane as a helical span at residues 87-110 (KVIPYILSQISGTFFFTFLIYLIF). Over 111-145 (NNLLNSFESKYNIVRGTKKSLELASLFCVFPKENY) the chain is Extracellular. Residues 146-171 (NFIHDFILEILIGIIFIIILMKLSEK) form a helical membrane-spanning segment. The Cytoplasmic portion of the chain corresponds to 172-180 (NNLFKFYKF). A helical membrane pass occupies residues 181-197 (INPFLIGTLVIIINLFL). Over 198-201 (TSYS) the chain is Extracellular. Residues 202–205 (NITL) lie within the membrane without spanning it. The short motif at 206 to 208 (NPA) is the NPA 2 element. Residues 206–219 (NPARDLGPRIFLSL) constitute an intramembrane region (helical). Over 220-234 (IGWGKLAFTGDDNII) the chain is Extracellular. The helical transmembrane segment at 235–259 (FPYFLIPTIAPIIGINLGGWIYILY) threads the bilayer. Residues 260–262 (IKK) lie on the Cytoplasmic side of the membrane.

This sequence belongs to the MIP/aquaporin (TC 1.A.8) family.

It is found in the cell membrane. It catalyses the reaction glycerol(in) = glycerol(out). Its function is as follows. Mediates glycerol diffusion across the cytoplasmic membrane via a pore-type mechanism. This chain is Glycerol uptake facilitator protein (glpF), found in Buchnera aphidicola subsp. Schizaphis graminum (strain Sg).